The following is a 524-amino-acid chain: Origin of replication complex subunit 5 (524 aa).

Over residues 1 to 19 (MSQPVTPRRTTRSSASASP) the composition is skewed to low complexity. The interval 1 to 56 (MSQPVTPRRTTRSSASASPSPAPASPTSPPKSRPKPSPRRQLLAAAAAPPKEDGSS) is disordered. Residues 20-31 (SPAPASPTSPPK) show a composition bias toward pro residues. Residues 39 to 49 (RRQLLAAAAAP) are compositionally biased toward low complexity. Position 90–97 (90–97 (GGAATGKT)) interacts with ATP.

It belongs to the ORC5 family. In terms of assembly, component of the origin recognition complex (ORC) composed of at least ORC1, ORC2, ORC3, ORC4, ORC5 and ORC6. ORC is regulated in a cell-cycle and development dependent manner. It is sequentially assembled at the exit from anaphase of mitosis and disassembled as cells enter S phase.

It localises to the nucleus. Its function is as follows. Component of the origin recognition complex (ORC) that binds origins of replication. DNA-binding is ATP-dependent. The specific DNA sequences that define origins of replication have not been identified yet. ORC is required to assemble the pre-replication complex necessary to initiate DNA replication. The polypeptide is Origin of replication complex subunit 5 (Oryza sativa subsp. indica (Rice)).